A 303-amino-acid chain; its full sequence is uncharacterized protein (303 aa).

Ser63 bears the Phosphoserine mark.

The protein belongs to the HAD-like hydrolase superfamily.

It localises to the cytoplasm. It is found in the nucleus. This is an uncharacterized protein from Schizosaccharomyces pombe (strain 972 / ATCC 24843) (Fission yeast).